Consider the following 145-residue polypeptide: Protein AggB (145 aa).

Residues 1–24 form the signal peptide; that stretch reads MLKKSILPMSCGVLVMVMSGLLDA.

The protein to E.coli AfaD.

In Escherichia coli, this protein is Protein AggB (aggB).